Here is a 312-residue protein sequence, read N- to C-terminus: Phospholipid phosphatase 3 (312 aa).

Residues 1–33 (MQSYKYDKAIVPESKNGGSPALNNNPRKGGSKR) lie on the Cytoplasmic side of the membrane. Ser19 bears the Phosphoserine mark. A helical membrane pass occupies residues 34–54 (VLLICLDLFCLFMAALPFLII). Residues 55 to 85 (ETSTIKPYRRGFYCNDESIKYPLKVSETIND) are Extracellular-facing. Residues 86 to 106 (AVLCAVGIVIAILAIITGEFY) traverse the membrane as a helical segment. The Cytoplasmic portion of the chain corresponds to 107–123 (RIYYLKEKSRSTTQNPY). Positions 109-110 (YY) match the Dityrosine basolateral targeting motif motif. A helical transmembrane segment spans residues 124–144 (VAALYKQVGCFLFGCAISQSF). Residues 145–194 (TDIAKVSIGRLRPHFLSVCDPDFSQINCSEGYIQNYRCRGEDSKVQEARK) are Extracellular-facing. The tract at residues 149 to 157 (KVSIGRLRP) is phosphatase sequence motif I. Residue Asn171 is glycosylated (N-linked (GlcNAc...) asparagine). The Integrin-binding motif signature appears at 183–185 (RGE). Residues 195–215 (SFFSGHASFSMFTMLYLVLYL) traverse the membrane as a helical segment. Residues 197–200 (FSGH) are phosphatase sequence motif II. His200 acts as the Proton donors in catalysis. Residues 216-226 (QARFTWRGARL) are Cytoplasmic-facing. A helical membrane pass occupies residues 227–244 (LRPLLQFTLLMMAFYTGL). The segment at 245–256 (SRVSDYKHHPSD) is phosphatase sequence motif III. Residues 245-258 (SRVSDYKHHPSDVL) lie on the Extracellular side of the membrane. His252 serves as the catalytic Nucleophile. A helical transmembrane segment spans residues 259–279 (AGFAQGALVACCIVFFVSDLF). The mediates interaction with CTNND1 stretch occupies residues 276–312 (SDLFKTKTSLSLPAPAIRREILSPVDIIDRNNHHNMV). The Cytoplasmic portion of the chain corresponds to 280–312 (KTKTSLSLPAPAIRREILSPVDIIDRNNHHNMV).

The protein belongs to the PA-phosphatase related phosphoesterase family. As to quaternary structure, forms functional homodimers and homooligomers that are not required for substrate recognition and catalytic activity. Can also form heterooligomers with other PLPP2 and PLPP3. Interacts with CTNND1; negatively regulates the PLPP3-mediated stabilization of beta-catenin/CTNNB1. In terms of processing, N-glycosylated. Contains high-mannose oligosaccharides. In terms of tissue distribution, detected in lung, cerebellum and heart atrium.

It is found in the cell membrane. The protein localises to the basolateral cell membrane. Its subcellular location is the endoplasmic reticulum membrane. It localises to the endoplasmic reticulum-Golgi intermediate compartment membrane. The protein resides in the golgi apparatus membrane. It is found in the golgi apparatus. The protein localises to the trans-Golgi network membrane. Its subcellular location is the membrane raft. The catalysed reaction is a 1,2-diacyl-sn-glycero-3-phosphate + H2O = a 1,2-diacyl-sn-glycerol + phosphate. The enzyme catalyses 1,2-dihexadecanoyl-sn-glycero-3-phosphate + H2O = 1,2-dihexadecanoyl-sn-glycerol + phosphate. It catalyses the reaction 1,2-di-(9Z-octadecenoyl)-sn-glycero-3-phosphate + H2O = 1,2-di-(9Z-octadecenoyl)-sn-glycerol + phosphate. It carries out the reaction a monoacyl-sn-glycero-3-phosphate + H2O = a monoacylglycerol + phosphate. The catalysed reaction is (9Z)-octadecenoyl-sn-glycero-3-phosphate + H2O = (9Z-octadecenoyl)-glycerol + phosphate. The enzyme catalyses sphing-4-enine 1-phosphate + H2O = sphing-4-enine + phosphate. It catalyses the reaction an N-acylsphing-4-enine 1-phosphate + H2O = an N-acylsphing-4-enine + phosphate. It carries out the reaction N-(octanoyl)-sphing-4-enine-1-phosphate + H2O = N-octanoylsphing-4-enine + phosphate. The catalysed reaction is N-(9Z-octadecenoyl)-ethanolamine phosphate + H2O = N-(9Z-octadecenoyl) ethanolamine + phosphate. Its pathway is lipid metabolism; phospholipid metabolism. Its activity is regulated as follows. Magnesium-independent phospholipid phosphatase. Insensitive to N-ethylmaleimide. Functionally, magnesium-independent phospholipid phosphatase of the plasma membrane that catalyzes the dephosphorylation of a variety of glycerolipid and sphingolipid phosphate esters including phosphatidate/PA, lysophosphatidate/LPA, diacylglycerol pyrophosphate/DGPP, sphingosine 1-phosphate/S1P and ceramide 1-phosphate/C1P. Also acts on N-oleoyl ethanolamine phosphate/N-(9Z-octadecenoyl)-ethanolamine phosphate, a potential physiological compound. Has both an extracellular and an intracellular phosphatase activity, allowing the hydrolysis and the cellular uptake of these bioactive lipid mediators from the milieu, regulating signal transduction in different cellular processes. Through the dephosphorylation of extracellular sphingosine-1-phosphate and the regulation of its extra- and intracellular availability, plays a role in vascular homeostasis, regulating endothelial cell migration, adhesion, survival, proliferation and the production of pro-inflammatory cytokines. By maintaining the appropriate levels of this lipid in the cerebellum, also ensure its proper development and function. Through its intracellular lipid phosphatase activity may act in early compartments of the secretory pathway, regulating the formation of Golgi to endoplasmic reticulum retrograde transport carriers. Its function is as follows. Independently of this phosphatase activity may also function in the Wnt signaling pathway and the stabilization of beta-catenin/CTNNB1, thereby regulating cell proliferation, migration and differentiation in angiogenesis or yet in tumor growth. Also plays a role in integrin-mediated cell-cell adhesion in angiogenesis. The protein is Phospholipid phosphatase 3 of Mus musculus (Mouse).